Consider the following 75-residue polypeptide: Scuwaprin-a (75 aa).

Positions 1-24 are cleaved as a signal peptide; that stretch reads MSSGGLLLLLGLLTLWAELTPVSG. One can recognise a WAP domain in the interval 27-72; it reads RPKKPGLCPPRPQKPPCVKECKNDWSCPGQQKCCSYGCIDECRDPI. Intrachain disulfides connect Cys34/Cys60, Cys43/Cys64, Cys47/Cys59, and Cys53/Cys68.

Belongs to the venom waprin family. In terms of tissue distribution, expressed by the venom gland.

Its subcellular location is the secreted. Its function is as follows. Damages membranes of susceptible bacteria. Has no hemolytic activity. Not toxic to mice. Does not inhibit the proteinases elastase and cathepsin G. This chain is Scuwaprin-a, found in Oxyuranus scutellatus scutellatus (Australian taipan).